The primary structure comprises 108 residues: Small proline-rich protein 5 (108 aa).

The span at 1–13 shows a compositional bias: low complexity; that stretch reads MSQQKQKQCAPPQ. Disordered regions lie at residues 1–24 and 73–108; these read MSQQ…QRCP and PPPQ…SKQK. Pro residues-rich tracts occupy residues 14 to 24 and 73 to 100; these read QCCPPPQQRCP and PPPQ…PPPQ.

Its function is as follows. Positively regulates keratinocyte differentiation by inducing genes associated with epidermal differentiation. The polypeptide is Small proline-rich protein 5 (Homo sapiens (Human)).